The following is a 355-amino-acid chain: Guanine nucleotide-binding protein subunit beta-5a (355 aa).

The segment at 1–23 is disordered; that stretch reads MAAQEEPAQPGDSLATLKSESDT. WD repeat units follow at residues 63–102, 105–144, 153–194, 195–238, 239–278, 280–322, and 325–355; these read GHGN…KEHA, MPCT…NENL, MHTN…QSFH, GHAA…QSFE, SHDS…EVAI, SKES…RVSI, and GHEN…RIWA.

This sequence belongs to the WD repeat G protein beta family. As to quaternary structure, may interact with RGS9; this interaction stabilizes both proteins and increases RGS9 GTPase-activating protein (GAP) activity, hence accelerating the deactivation of D(2) dopamine receptor-mediated signaling.

The protein resides in the membrane. Its function is as follows. Enhances GTPase-activating protein (GAP) activity of regulator of G protein signaling (RGS) proteins, such as RGS7 and RGS9, hence involved in the termination of the signaling initiated by the G protein coupled receptors (GPCRs) by accelerating the GTP hydrolysis on the G-alpha subunits, thereby promoting their inactivation. Increases RGS7 GTPase-activating protein (GAP) activity, thereby regulating mood and cognition. Increases RGS9 GTPase-activating protein (GAP) activity, hence contributes to the deactivation of G protein signaling initiated by D(2) dopamine receptors. Along with gnb5b, plays an important role in neuronal signaling, including in the parasympathetic, but not sympathetic, control of heart rate. The protein is Guanine nucleotide-binding protein subunit beta-5a of Danio rerio (Zebrafish).